The sequence spans 793 residues: Outer membrane protein assembly factor BamA (793 aa).

The N-terminal stretch at 1-19 (MKKLLIASLLFGTTTTVFA) is a signal peptide. POTRA domains follow at residues 22–89 (FVAK…VVAK), 90–170 (SIIS…INED), 173–259 (AKLA…VNEG), 262–341 (YDLR…VDAG), and 344–418 (LTVR…VKER).

This sequence belongs to the BamA family. In terms of assembly, part of the Bam complex.

Its subcellular location is the cell outer membrane. Part of the outer membrane protein assembly complex, which is involved in assembly and insertion of beta-barrel proteins into the outer membrane. The protein is Outer membrane protein assembly factor BamA of Haemophilus influenzae.